Reading from the N-terminus, the 163-residue chain is MPSFDIVSEVDLQEARNAVDNASREVESRFDFRNVEASFELNDARKTIKVLSESDFQVNQLLDILRAKLLKRGIEGSSLDVPENIVHSGKTWFVEAKLKQGIESATQKKIVKMIKDSKLKVQAQIQGDEIRVTGKSRDDLQAVMAMVRGGDLGQPFQFKNFRD.

This sequence belongs to the YajQ family.

Its function is as follows. Nucleotide-binding protein. This Shigella dysenteriae serotype 1 (strain Sd197) protein is Nucleotide-binding protein YajQ.